A 409-amino-acid polypeptide reads, in one-letter code: tRNA(Met) cytidine acetate ligase (409 aa).

Residues Val-7–His-20, Gly-102, Asn-169, and Arg-194 contribute to the ATP site.

The protein belongs to the TmcAL family.

The protein resides in the cytoplasm. The catalysed reaction is cytidine(34) in elongator tRNA(Met) + acetate + ATP = N(4)-acetylcytidine(34) in elongator tRNA(Met) + AMP + diphosphate. Catalyzes the formation of N(4)-acetylcytidine (ac(4)C) at the wobble position of elongator tRNA(Met), using acetate and ATP as substrates. First activates an acetate ion to form acetyladenylate (Ac-AMP) and then transfers the acetyl group to tRNA to form ac(4)C34. The sequence is that of tRNA(Met) cytidine acetate ligase from Clostridium botulinum (strain Kyoto / Type A2).